Reading from the N-terminus, the 217-residue chain is 3,4-dihydroxy-2-butanone 4-phosphate synthase (217 aa).

D-ribulose 5-phosphate contacts are provided by residues 37–38 (RE), aspartate 42, 150–154 (RRGHT), and glutamate 174. Glutamate 38 lines the Mg(2+) pocket. Histidine 153 lines the Mg(2+) pocket.

It belongs to the DHBP synthase family. In terms of assembly, homodimer. Mg(2+) is required as a cofactor. The cofactor is Mn(2+).

It carries out the reaction D-ribulose 5-phosphate = (2S)-2-hydroxy-3-oxobutyl phosphate + formate + H(+). It functions in the pathway cofactor biosynthesis; riboflavin biosynthesis; 2-hydroxy-3-oxobutyl phosphate from D-ribulose 5-phosphate: step 1/1. Functionally, catalyzes the conversion of D-ribulose 5-phosphate to formate and 3,4-dihydroxy-2-butanone 4-phosphate. The sequence is that of 3,4-dihydroxy-2-butanone 4-phosphate synthase from Shewanella sp. (strain MR-4).